Reading from the N-terminus, the 353-residue chain is Photosystem II protein D1 (353 aa).

T2 carries the post-translational modification N-acetylthreonine. T2 is subject to Phosphothreonine. 3 consecutive transmembrane segments (helical) span residues 29-46 (YVGW…TAVS), 118-133 (HFFL…EWEL), and 142-156 (WIAV…AATA). H118 provides a ligand contact to chlorophyll a. A pheophytin a-binding site is contributed by Y126. The [CaMn4O5] cluster site is built by D170 and E189. Residues 197-218 (FHMLGVAGVFGGSLFSAMHGSL) form a helical membrane-spanning segment. H198 provides a ligand contact to chlorophyll a. A quinone contacts are provided by residues H215 and 264 to 265 (SF). Position 215 (H215) interacts with Fe cation. H272 is a Fe cation binding site. The helical transmembrane segment at 274–288 (FLAAWPVVGIWFTAL) threads the bilayer. Residues H332, E333, D342, and A344 each coordinate [CaMn4O5] cluster. The propeptide occupies 345–353 (SVEAPSING).

Belongs to the reaction center PufL/M/PsbA/D family. PSII is composed of 1 copy each of membrane proteins PsbA, PsbB, PsbC, PsbD, PsbE, PsbF, PsbH, PsbI, PsbJ, PsbK, PsbL, PsbM, PsbT, PsbX, PsbY, PsbZ, Psb30/Ycf12, at least 3 peripheral proteins of the oxygen-evolving complex and a large number of cofactors. It forms dimeric complexes. The D1/D2 heterodimer binds P680, chlorophylls that are the primary electron donor of PSII, and subsequent electron acceptors. It shares a non-heme iron and each subunit binds pheophytin, quinone, additional chlorophylls, carotenoids and lipids. D1 provides most of the ligands for the Mn4-Ca-O5 cluster of the oxygen-evolving complex (OEC). There is also a Cl(-1) ion associated with D1 and D2, which is required for oxygen evolution. The PSII complex binds additional chlorophylls, carotenoids and specific lipids. is required as a cofactor. Tyr-161 forms a radical intermediate that is referred to as redox-active TyrZ, YZ or Y-Z. Post-translationally, C-terminally processed by CTPA; processing is essential to allow assembly of the oxygen-evolving complex and thus photosynthetic growth.

It localises to the plastid. The protein resides in the chloroplast thylakoid membrane. It catalyses the reaction 2 a plastoquinone + 4 hnu + 2 H2O = 2 a plastoquinol + O2. Photosystem II (PSII) is a light-driven water:plastoquinone oxidoreductase that uses light energy to abstract electrons from H(2)O, generating O(2) and a proton gradient subsequently used for ATP formation. It consists of a core antenna complex that captures photons, and an electron transfer chain that converts photonic excitation into a charge separation. The D1/D2 (PsbA/PsbD) reaction center heterodimer binds P680, the primary electron donor of PSII as well as several subsequent electron acceptors. The sequence is that of Photosystem II protein D1 from Tupiella akineta (Green alga).